A 280-amino-acid polypeptide reads, in one-letter code: Ribosomal protein L11 methyltransferase (280 aa).

S-adenosyl-L-methionine contacts are provided by T131, G152, D174, and N217.

This sequence belongs to the methyltransferase superfamily. PrmA family.

The protein localises to the cytoplasm. It catalyses the reaction L-lysyl-[protein] + 3 S-adenosyl-L-methionine = N(6),N(6),N(6)-trimethyl-L-lysyl-[protein] + 3 S-adenosyl-L-homocysteine + 3 H(+). Functionally, methylates ribosomal protein L11. The sequence is that of Ribosomal protein L11 methyltransferase from Bacteroides thetaiotaomicron (strain ATCC 29148 / DSM 2079 / JCM 5827 / CCUG 10774 / NCTC 10582 / VPI-5482 / E50).